A 721-amino-acid polypeptide reads, in one-letter code: Zinc-transporting ATPase (721 aa).

Residues 1–107 (MTQSSPLKTQ…HSHGAGEFNL (107 aa)) lie on the Cytoplasmic side of the membrane. Positions 8 to 74 (KTQQMQVGGM…RIAALGYTLA (67 aa)) constitute an HMA domain. Zn(2+) contacts are provided by cysteine 19 and cysteine 22. Residues 80 to 101 (VTLNGHKHPHSHREEGHSHSHG) form a disordered region. A helical membrane pass occupies residues 108–128 (KQELLPVLTAIALFTIAILFE). Topologically, residues 129–140 (QPLHNTPGQIAE) are extracellular. The chain crosses the membrane as a helical span at residues 141–160 (FAVIIPAYLLSGWTVLKTAG). The Cytoplasmic segment spans residues 161–167 (RNILRGQ). A helical transmembrane segment spans residues 168–187 (IFDENFLMTIATLGALAIHQ). Over 188–190 (LPE) the chain is Extracellular. A helical membrane pass occupies residues 191–210 (AVAVMLFFRVGELFQEYSVG). The Cytoplasmic portion of the chain corresponds to 211–344 (RSRRSIKALL…ITQFARYYTP (134 aa)). Residues 345 to 363 (VIVFLSLAVALLPPLFIPG) form a helical membrane-spanning segment. Residues 364–369 (ADRADW) lie on the Extracellular side of the membrane. A helical transmembrane segment spans residues 370–387 (VYRALVLLVISCPCGLVI). At 388 to 671 (SIPLGYFGGI…AIHVARKTRQ (284 aa)) the chain is on the cytoplasmic side. The active-site 4-aspartylphosphate intermediate is the aspartate 425. Mg(2+)-binding residues include aspartate 618 and aspartate 622. The helical transmembrane segment at 672–693 (IVVQNIVLALGIKALFIALGTI) threads the bilayer. Residues 694–701 (GLATLWEA) lie on the Extracellular side of the membrane. A helical transmembrane segment spans residues 702–717 (VFADVGVALLAILNAT). Over 718–721 (RIAK) the chain is Cytoplasmic.

The protein belongs to the cation transport ATPase (P-type) (TC 3.A.3) family. Type IB subfamily.

Its subcellular location is the cell membrane. The catalysed reaction is Zn(2+)(in) + ATP + H2O = Zn(2+)(out) + ADP + phosphate + H(+). The sequence is that of Zinc-transporting ATPase (ziaA) from Synechocystis sp. (strain ATCC 27184 / PCC 6803 / Kazusa).